The following is a 293-amino-acid chain: FAS1 domain-containing protein DEHA2G15708g (293 aa).

The signal sequence occupies residues 1–18 (MKLSSILYVSVLAHLVMS). Positions 76 to 87 (DHIGENEKREAK) are enriched in basic and acidic residues. Residues 76–126 (DHIGENEKREAKNVYNLQSLKEGLDDENDKREGNVNKPEVSEEGSNKGDKR) are disordered. One can recognise an FAS1 domain in the interval 141 to 290 (QNLLQSILPQ…GYIFVINDVL (150 aa)).

Its subcellular location is the vacuole. This is FAS1 domain-containing protein DEHA2G15708g from Debaryomyces hansenii (strain ATCC 36239 / CBS 767 / BCRC 21394 / JCM 1990 / NBRC 0083 / IGC 2968) (Yeast).